A 408-amino-acid polypeptide reads, in one-letter code: MQATTAAAAAQLLTDTRRGPRCSRARLGATRLSWPGRFAVEAFAGRCQSSATTVTHRFSAISQATSPRRKARRQCSDDQSALQAGCSKVNRDQHGYDVNWFEEISQEVSKKLRAFYQFCRPHTIFGTIIGITSVSLLPMKSIDDFTATVLKGYLEALAAALCMNIYVVGLNQLYDIQIDKINKPGLPLAAGEFSVATGVFLVVTFLIMSFSIGIHSGSVPLMYALVVSFLLGSAYSIEAPLLRWKRHALLAASCILFVRAILVQLAFFAHMQQHVLKRPLAATKSLVFATLFMCCFSAVIALFKDIPDVDGDRDFGIQSLSVRLGPQRVYQLCISILLTAYLAATVVGASSTHLLQKIITVSGHGLLALTLWQRARHLEVENQARVTSFYMFIWKLFYAEYFLIPFVQ.

The N-terminal 68 residues, 1–68 (MQATTAAAAA…SAISQATSPR (68 aa)), are a transit peptide targeting the chloroplast. Helical transmembrane passes span 122–142 (HTIF…MKSI), 149–169 (VLKG…YVVG), 194–214 (SVAT…SIGI), 217–237 (GSVP…AYSI), 248–268 (ALLA…LAFF), 286–306 (LVFA…FKDI), 329–349 (VYQL…VVGA), 352–372 (THLL…LTLW), and 386–406 (VTSF…LIPF).

The protein belongs to the UbiA prenyltransferase family.

It localises to the plastid. Its subcellular location is the chloroplast membrane. It catalyses the reaction homogentisate + (2E,6E,10E)-geranylgeranyl diphosphate + H(+) = 6-geranylgeranyl-2-methylbenzene-1,4-diol + CO2 + diphosphate. Its pathway is cofactor biosynthesis; tocopherol biosynthesis. Involved in the synthesis of tocotrienol (vitamin E). Catalyzes the condensation of homogentisate and geranylgeranyl diphosphate to form 2-methyl-6-geranylgeranylbenzoquinol. Possesses low activity with phytyl diphosphate as substrate. The polypeptide is Homogentisate geranylgeranyltransferase (Triticum aestivum (Wheat)).